The chain runs to 164 residues: Probable calcium-binding protein CML17 (164 aa).

4 EF-hand domains span residues 4-39 (DQQA…LGMP), 40-75 (VHRE…VMRV), 88-123 (VDEA…LGIK), and 126-161 (RTAE…GAFA). 19 residues coordinate Ca(2+): Asp17, Asp19, Asp21, Arg23, Glu28, Asp53, Asn55, Asp57, Cys59, Glu64, Asp101, Asn103, Asp105, Glu112, Asp139, Asp141, Asp143, Arg145, and Glu150.

Its function is as follows. Potential calcium sensor. In Oryza sativa subsp. japonica (Rice), this protein is Probable calcium-binding protein CML17 (CML17).